The primary structure comprises 727 residues: ABC transporter G family member 6 (727 aa).

Residues 68–333 form the ABC transporter domain; the sequence is LSFTDLTYSV…FAEFGHPIPE (266 aa). 126-133 is a binding site for ATP; it reads GASGSGKS. The ABC transmembrane type-2 domain maps to 421-631; sequence VELAVLAKRS…PYEAVLLNEF (211 aa). 6 helical membrane-spanning segments follow: residues 440–460, 475–495, 517–537, 560–580, 581–601, and 700–720; these read LFGI…TMFW, CFAF…PVFL, LSHS…FAAI, ASFW…PHVM, LGYT…GFFI, and LWVT…SLLL.

This sequence belongs to the ABC transporter superfamily. ABCG family. Eye pigment precursor importer (TC 3.A.1.204) subfamily.

It is found in the membrane. The polypeptide is ABC transporter G family member 6 (ABCG6) (Arabidopsis thaliana (Mouse-ear cress)).